The chain runs to 393 residues: Formate-dependent phosphoribosylglycinamide formyltransferase (393 aa).

N(1)-(5-phospho-beta-D-ribosyl)glycinamide-binding positions include 22 to 23 (EL) and E82. ATP is bound by residues R114, K155, 160-165 (SSGHGQ), 195-198 (EGFV), and E203. Residues 119-308 (RLAAEELGLP…EFALHARAIL (190 aa)) enclose the ATP-grasp domain. 2 residues coordinate Mg(2+): E267 and E279. Residues D286, K356, and 363–364 (RR) contribute to the N(1)-(5-phospho-beta-D-ribosyl)glycinamide site.

This sequence belongs to the PurK/PurT family. Homodimer.

The enzyme catalyses N(1)-(5-phospho-beta-D-ribosyl)glycinamide + formate + ATP = N(2)-formyl-N(1)-(5-phospho-beta-D-ribosyl)glycinamide + ADP + phosphate + H(+). It functions in the pathway purine metabolism; IMP biosynthesis via de novo pathway; N(2)-formyl-N(1)-(5-phospho-D-ribosyl)glycinamide from N(1)-(5-phospho-D-ribosyl)glycinamide (formate route): step 1/1. Its function is as follows. Involved in the de novo purine biosynthesis. Catalyzes the transfer of formate to 5-phospho-ribosyl-glycinamide (GAR), producing 5-phospho-ribosyl-N-formylglycinamide (FGAR). Formate is provided by PurU via hydrolysis of 10-formyl-tetrahydrofolate. The sequence is that of Formate-dependent phosphoribosylglycinamide formyltransferase from Mannheimia succiniciproducens (strain KCTC 0769BP / MBEL55E).